The primary structure comprises 517 residues: Endoglycoceramidase (517 aa).

A signal peptide spans 1-17 (MISVALIILFLAKVISG). The N-linked (GlcNAc...) asparagine glycan is linked to Asn99. Glu230 functions as the Proton donor in the catalytic mechanism. 3 N-linked (GlcNAc...) asparagine glycosylation sites follow: Asn298, Asn380, and Asn393.

It belongs to the glycosyl hydrolase 5 (cellulase A) family. As to expression, expressed uniformly in digestive cells, tentacles and peduncle regions suggesting expression in the endoderm throughout the whole body (at protein level).

Its subcellular location is the secreted. The enzyme catalyses an oligoglycosyl-(1-&gt;4)-beta-D-glucosyl-(1&lt;-&gt;1)-ceramide + H2O = an oligoglycosyl-(1-&gt;4)-D-glucose + an N-acyl-sphingoid base. With respect to regulation, cu(2+), zinc, manganese, calcium, magnesium and EDTA have no significant effects on enzyme activity. Enzyme requires presence of detergents such as Triton X-100 and Lubrol PX for the hydrolysis of glycosphingolipids. Taurodeoxycholate strongly inhibits the enzyme activity. Its function is as follows. Hydrolysis of the glycosidic linkage between oligosaccharides and ceramides of glycosphingolipids, optimal substrates appear to be the glycosphingolipids with a gangliotetraose structure. This Hydra vulgaris (Hydra) protein is Endoglycoceramidase.